A 238-amino-acid chain; its full sequence is Ankyrin repeat domain-containing protein 49 (238 aa).

The interval 38 to 57 (TGTQSLWVGNSDEDEEQEEK) is disordered. S48 bears the Phosphoserine mark. Acidic residues predominate over residues 48-57 (SDEDEEQEEK). 4 ANK repeats span residues 72–105 (DPSK…TRDE), 106–135 (DEYT…DVHA), 139–168 (DGWT…DINA), and 172–205 (GLLT…ELKN).

In terms of tissue distribution, expressed in spermatogonia, spermatocytes and round spermatids.

The protein resides in the nucleus. May have a role in spermatogenesis where it promotes autophagy in response to serum starvation, via the NF-kappaB pathway. This is Ankyrin repeat domain-containing protein 49 (Ankrd49) from Mus musculus (Mouse).